Reading from the N-terminus, the 574-residue chain is Laccase-12 (574 aa).

The N-terminal stretch at 1-27 (MAAASSVLRCCLLVAALMTLSAMGAEA) is a signal peptide. Plastocyanin-like domains are found at residues 35 to 151 (DVQT…PPAG) and 161 to 314 (EEVP…YDDP). The N-linked (GlcNAc...) asparagine glycan is linked to Asn-81. Residues His-85, His-87, His-130, and His-132 each coordinate Cu cation. Residues Asn-173, Asn-190, Asn-206, Asn-242, Asn-302, Asn-335, Asn-342, Asn-381, Asn-388, Asn-398, Asn-434, Asn-441, and Asn-447 are each glycosylated (N-linked (GlcNAc...) asparagine). The 135-residue stretch at 424 to 558 (NFPYYPLNPF…KMAWLVLDGS (135 aa)) folds into the Plastocyanin-like 3 domain. His-475, His-478, His-480, His-537, Cys-538, His-539, and His-543 together coordinate Cu cation.

This sequence belongs to the multicopper oxidase family. Cu cation is required as a cofactor.

It localises to the secreted. It is found in the extracellular space. Its subcellular location is the apoplast. It carries out the reaction 4 hydroquinone + O2 = 4 benzosemiquinone + 2 H2O. In terms of biological role, lignin degradation and detoxification of lignin-derived products. This is Laccase-12 (LAC12) from Oryza sativa subsp. japonica (Rice).